The chain runs to 605 residues: MKRIIFNFCFVWLAVSAFAGSKVVEMRNYGLVPDTHENLSPKLQKALQDIKSQVALGDKVTLLFESGRYDFHPEGAAVREYYISNHDQDNPKTVGFPLEDWKGLTVDGQGADFIFHGRMLPLSLLRSENCTLRNFSIDFETPHIAQVKILESGEEGITFEPAAWVKCRINEKGFFEAYGEGWSSAPQGGIAFEEKTKRLVYRTSDLWCPMEGVKEVSPRVYHAPQWKDARLKPGTVVALRTYYRPAPGIFLSNDKDTRLQNVKVHYAEGMGLLAQLCENITLDEFSVCLRGDKDPRYFTTQADATHFSSCRGKIDSRNGLYEGMMDDAINVHGTYLKIKQRLDDHTVIARYMHPQAYGFEWGVNGDEVQFVRSATMELTGGKNRVKEILPNDKDTVKGAKEYRITFAEPLDAEITDKEGFGIENLSWCPEVYFADNVIRNNRARGTLFSTPLKTVVERNLFDHTSGTAILLCGDCNGWFETGACRNVLIRNNRFINALTNMFQFTEAVISIYPEIPDLEHQKKYFHGGKGEKGVVIEDNYFETFDRPVLFAKSIDGLIFKNNVIRQNTDYPAFHHNKSRFRLLHTRNVKIEKNNFEDGDESIARE.

An N-terminal signal peptide occupies residues 1–19; that stretch reads MKRIIFNFCFVWLAVSAFA. PbH1 repeat units follow at residues 428–450, 451–473, and 484–538; these read CPEV…LFST, PLKT…LLCG, and CRNV…VIED.

This sequence belongs to the glycosyl hydrolase 110 family. B subfamily.

It carries out the reaction Hydrolysis of terminal, non-reducing branched (1-&gt;3)-alpha-D-galactosidic residues, producing free D-galactose.. The enzyme catalyses Hydrolysis of terminal, non-reducing linear (1-&gt;3)-alpha-D-galactosidic residues, producing free D-galactose.. The catalysed reaction is Hydrolysis of terminal, non-reducing alpha-D-galactose residues in alpha-D-galactosides, including galactose oligosaccharides, galactomannans and galactolipids.. In terms of biological role, alpha-galactosidase. Removes both branched alpha-1,3-linked galactose residues of blood group B antigens and linear alpha-1,3-linked galactose structures. In Phocaeicola vulgatus (strain ATCC 8482 / DSM 1447 / JCM 5826 / CCUG 4940 / NBRC 14291 / NCTC 11154) (Bacteroides vulgatus), this protein is Alpha-1,3-galactosidase B (glaB2).